Reading from the N-terminus, the 309-residue chain is Protein phosphatase 1 regulatory subunit 42 (309 aa).

LRR repeat units follow at residues 29–50 (KITHINFSDKNIDAIEDLSLCK), 51–72 (NLSVLYLYDNCISQITNLNYAT), 73–94 (NLTHLYLQNNCISCIENLRSLK), 95–116 (KLEKLYLGGNYIAVIEGLEGLG), 117–138 (ELRELHVENQRLPLGEKLLFDP), 147–168 (SLCILNISNNNIDDITDLELLE), and 169–190 (NLNQLIAVDNQLLHVKDLEFLL). Residues 204-242 (NPVCLKPKYRDRLILVSKSLEFLDGKEIKNIERQFLMNW) enclose the LRRCT domain.

In terms of assembly, interacts with PPP1CC isoform gamma-2; the interaction is direct. Interacts with actin, dynein, KIF5B, KIFC1 and tubulin. Associates with microtubules. Phosphorylated; in the testis.

The protein localises to the cytoplasm. Its subcellular location is the cytoskeleton. It localises to the microtubule organizing center. The protein resides in the centrosome. In terms of biological role, regulates phosphatase activity of protein phosphatase 1 (PP1) complexes in the testis. This chain is Protein phosphatase 1 regulatory subunit 42, found in Homo sapiens (Human).